The sequence spans 298 residues: N-acetylmuramic acid 6-phosphate etherase (298 aa).

The region spanning 55 to 218 is the SIS domain; sequence IHAQVSGGGR…STGLMIKSGK (164 aa). The active-site Proton donor is Glu83. Glu114 is a catalytic residue.

This sequence belongs to the GCKR-like family. MurNAc-6-P etherase subfamily. In terms of assembly, homodimer.

It catalyses the reaction N-acetyl-D-muramate 6-phosphate + H2O = N-acetyl-D-glucosamine 6-phosphate + (R)-lactate. It participates in amino-sugar metabolism; 1,6-anhydro-N-acetylmuramate degradation. The protein operates within amino-sugar metabolism; N-acetylmuramate degradation. Its pathway is cell wall biogenesis; peptidoglycan recycling. Functionally, specifically catalyzes the cleavage of the D-lactyl ether substituent of MurNAc 6-phosphate, producing GlcNAc 6-phosphate and D-lactate. Together with AnmK, is also required for the utilization of anhydro-N-acetylmuramic acid (anhMurNAc) either imported from the medium or derived from its own cell wall murein, and thus plays a role in cell wall recycling. This is N-acetylmuramic acid 6-phosphate etherase from Shigella flexneri.